The primary structure comprises 508 residues: MTDKEESNHSSEVGAVRSLQETPTWALATVCFFFIAVSICLERLINLLSTRLKKNRKTSLLEAVEKLKSVLMVLGFMSLMLNVTEGEVSKICIPIKYANRMLPCRKTIKSHNDVSEDDDDDDGDNHDNSFFHQCSSKGKTSLISEEGLTQLSYFFFVLACMHILCNLAILLLGMAKMRKWNSWEKETQTVEYLAANDPNRFRITRDTTFARRHLSSWTETSFQLWIKCFFRQFYNSVAKVDYLTLRHGFIFAHVSSNNAFNFQNYIQRSLHEDFKTVVGISPLMWLTVVIFMLLDVSGWRVYFYMSFVPLIIVLVIGTKLEMIVAKMAVTIKENNSVIRGTPLVESNDTHFWFSNPRFLLSILHYTLFLNTFEMAFIVWITWQFGINSCYHDNQGIIITRLVLAVTVQFLSSYITLPLYAIVTQMGSSYKRAILEEQLANVLRHWQGMVRDKKKTIQTPDTDNNSNNNNGDIDSGESPVQTEVASEFRFSGRQSPILQEIQIQEKTER.

Residues 1-21 (MTDKEESNHSSEVGAVRSLQE) lie on the Extracellular side of the membrane. The helical transmembrane segment at 22-42 (TPTWALATVCFFFIAVSICLE) threads the bilayer. Over 43–68 (RLINLLSTRLKKNRKTSLLEAVEKLK) the chain is Cytoplasmic. Residues 69–89 (SVLMVLGFMSLMLNVTEGEVS) form a helical membrane-spanning segment. Topologically, residues 90 to 153 (KICIPIKYAN…SEEGLTQLSY (64 aa)) are extracellular. The chain crosses the membrane as a helical span at residues 154–174 (FFFVLACMHILCNLAILLLGM). Topologically, residues 175–275 (AKMRKWNSWE…IQRSLHEDFK (101 aa)) are cytoplasmic. A helical transmembrane segment spans residues 276-296 (TVVGISPLMWLTVVIFMLLDV). Residues 297–304 (SGWRVYFY) are Extracellular-facing. The chain crosses the membrane as a helical span at residues 305–325 (MSFVPLIIVLVIGTKLEMIVA). Residues 326–357 (KMAVTIKENNSVIRGTPLVESNDTHFWFSNPR) lie on the Cytoplasmic side of the membrane. Residues 358 to 378 (FLLSILHYTLFLNTFEMAFIV) traverse the membrane as a helical segment. Over 379–401 (WITWQFGINSCYHDNQGIIITRL) the chain is Extracellular. Residues 402–422 (VLAVTVQFLSSYITLPLYAIV) form a helical membrane-spanning segment. The Cytoplasmic segment spans residues 423–508 (TQMGSSYKRA…EIQIQEKTER (86 aa)). Positions 436–457 (EQLANVLRHWQGMVRDKKKTIQ) are calmodulin-binding. Residues 453-492 (KKTIQTPDTDNNSNNNNGDIDSGESPVQTEVASEFRFSGR) form a disordered region. Position 494 is a phosphoserine (Ser494).

It belongs to the MLO family.

It is found in the membrane. In terms of biological role, may be involved in modulation of pathogen defense and leaf cell death. Activity seems to be regulated by Ca(2+)-dependent calmodulin binding and seems not to require heterotrimeric G proteins. This Arabidopsis thaliana (Mouse-ear cress) protein is MLO-like protein 3 (MLO3).